Reading from the N-terminus, the 156-residue chain is Small ribosomal subunit protein uS7 (156 aa).

It belongs to the universal ribosomal protein uS7 family. Part of the 30S ribosomal subunit. Contacts proteins S9 and S11.

Its function is as follows. One of the primary rRNA binding proteins, it binds directly to 16S rRNA where it nucleates assembly of the head domain of the 30S subunit. Is located at the subunit interface close to the decoding center, probably blocks exit of the E-site tRNA. This Parvibaculum lavamentivorans (strain DS-1 / DSM 13023 / NCIMB 13966) protein is Small ribosomal subunit protein uS7.